Reading from the N-terminus, the 371-residue chain is Probable RNA 3'-terminal phosphate cyclase-like protein (371 aa).

It belongs to the RNA 3'-terminal cyclase family. Type 2 subfamily. In terms of assembly, part of the small subunit (SSU) processome, composed of more than 70 proteins and the RNA chaperone small nucleolar RNA (snoRNA) U3.

The protein resides in the nucleus. The protein localises to the nucleolus. In terms of biological role, part of the small subunit (SSU) processome, first precursor of the small eukaryotic ribosomal subunit. During the assembly of the SSU processome in the nucleolus, many ribosome biogenesis factors, an RNA chaperone and ribosomal proteins associate with the nascent pre-rRNA and work in concert to generate RNA folding, modifications, rearrangements and cleavage as well as targeted degradation of pre-ribosomal RNA by the RNA exosome. Does not have cyclase activity. This is Probable RNA 3'-terminal phosphate cyclase-like protein (rcl1) from Dictyostelium discoideum (Social amoeba).